A 229-amino-acid chain; its full sequence is LexA repressor (229 aa).

The segment at residues isoleucine 28–lysine 48 is a DNA-binding region (H-T-H motif). Residues serine 147 and lysine 184 each act as for autocatalytic cleavage activity in the active site.

Belongs to the peptidase S24 family. As to quaternary structure, homodimer.

It catalyses the reaction Hydrolysis of Ala-|-Gly bond in repressor LexA.. Its function is as follows. Represses a number of genes involved in the response to DNA damage (SOS response), including recA and lexA. In the presence of single-stranded DNA, RecA interacts with LexA causing an autocatalytic cleavage which disrupts the DNA-binding part of LexA, leading to derepression of the SOS regulon and eventually DNA repair. The chain is LexA repressor from Anaeromyxobacter dehalogenans (strain 2CP-C).